Reading from the N-terminus, the 215-residue chain is Large ribosomal subunit protein bL25 (215 aa).

A compositionally biased stretch (acidic residues) spans 192 to 202; it reads EEEEVEEEVAE. The interval 192–215 is disordered; it reads EEEEVEEEVAEPEVIKRKEEEEEE. Residues 204 to 215 show a composition bias toward basic and acidic residues; the sequence is EVIKRKEEEEEE.

This sequence belongs to the bacterial ribosomal protein bL25 family. CTC subfamily. In terms of assembly, part of the 50S ribosomal subunit; part of the 5S rRNA/L5/L18/L25 subcomplex. Contacts the 5S rRNA. Binds to the 5S rRNA independently of L5 and L18.

In terms of biological role, this is one of the proteins that binds to the 5S RNA in the ribosome where it forms part of the central protuberance. This chain is Large ribosomal subunit protein bL25, found in Thermotoga neapolitana (strain ATCC 49049 / DSM 4359 / NBRC 107923 / NS-E).